Here is a 340-residue protein sequence, read N- to C-terminus: Extracellular matrix protein-binding protein emp (340 aa).

The N-terminal stretch at 1–26 (MKKKLLVLTMSTLFATQLINSNHANA) is a signal peptide.

The protein localises to the cell surface. In terms of biological role, adhesin that binds to the host cell extracellular matrix proteins fibronectin, fibrinogen, collagen, and vitronectin. This is Extracellular matrix protein-binding protein emp (emp) from Staphylococcus aureus.